Here is a 314-residue protein sequence, read N- to C-terminus: Glutathione synthetase (314 aa).

In terms of domain architecture, ATP-grasp spans 125 to 311 (EKIAAQLFPQ…IAGQLFDAIE (187 aa)). ATP is bound at residue 151-208 (FVQKQEQAILKPLDGMGGHSIFRSSNGDPNLNVILETLTDGGRTLAIAQRYLQQIIEG). Mg(2+)-binding residues include glutamate 282 and asparagine 284.

This sequence belongs to the prokaryotic GSH synthase family. Mg(2+) is required as a cofactor. It depends on Mn(2+) as a cofactor.

The catalysed reaction is gamma-L-glutamyl-L-cysteine + glycine + ATP = glutathione + ADP + phosphate + H(+). It functions in the pathway sulfur metabolism; glutathione biosynthesis; glutathione from L-cysteine and L-glutamate: step 2/2. This is Glutathione synthetase from Xylella fastidiosa (strain Temecula1 / ATCC 700964).